A 228-amino-acid chain; its full sequence is Acyl-protein thioesterase 1 (228 aa).

Catalysis depends on charge relay system residues Ser-119, Asp-174, and His-208.

It belongs to the AB hydrolase superfamily. AB hydrolase 2 family.

Its subcellular location is the cytoplasm. The protein resides in the nucleus. The catalysed reaction is S-hexadecanoyl-L-cysteinyl-[protein] + H2O = L-cysteinyl-[protein] + hexadecanoate + H(+). Its function is as follows. Hydrolyzes fatty acids from S-acylated cysteine residues in proteins with a strong preference for palmitoylated G-alpha proteins over other acyl substrates. Mediates the deacylation of G-alpha proteins such as GPA1 in vivo, but has weak or no activity toward palmitoylated Ras proteins. Has weak lysophospholipase activity in vitro; however such activity may not exist in vivo. The protein is Acyl-protein thioesterase 1 of Kluyveromyces lactis (strain ATCC 8585 / CBS 2359 / DSM 70799 / NBRC 1267 / NRRL Y-1140 / WM37) (Yeast).